We begin with the raw amino-acid sequence, 26 residues long: Stage V sporulation protein M (26 aa).

Residues 3–9 are important for localization; the sequence is FYTIKLP.

As to quaternary structure, interacts with SpoIVA. May interact with the ATP-dependent protease FtsH.

The protein resides in the forespore outer membrane. In terms of biological role, coordinates cortex and coat assembly during sporulation. Associates with the spore coat protein SpoIVA and with the outer forespore membrane, thereby serving as a membrane anchor that tethers SpoIVA and the entire spore coat to the forespore surface. May also serve as a competitive inhibitor of FtsH activity during sporulation. The chain is Stage V sporulation protein M from Bacillus subtilis (strain 168).